The primary structure comprises 341 residues: Anthranilate phosphoribosyltransferase (341 aa).

Residues glycine 79, 82 to 83 (GD), threonine 87, 89 to 92 (NIST), 107 to 115 (KHGNRAVSS), and serine 119 contribute to the 5-phospho-alpha-D-ribose 1-diphosphate site. Glycine 79 is an anthranilate binding site. Serine 91 is a Mg(2+) binding site. Residue asparagine 110 coordinates anthranilate. Arginine 165 lines the anthranilate pocket. Mg(2+)-binding residues include aspartate 224 and glutamate 225.

This sequence belongs to the anthranilate phosphoribosyltransferase family. Homodimer. The cofactor is Mg(2+).

It catalyses the reaction N-(5-phospho-beta-D-ribosyl)anthranilate + diphosphate = 5-phospho-alpha-D-ribose 1-diphosphate + anthranilate. It functions in the pathway amino-acid biosynthesis; L-tryptophan biosynthesis; L-tryptophan from chorismate: step 2/5. Functionally, catalyzes the transfer of the phosphoribosyl group of 5-phosphorylribose-1-pyrophosphate (PRPP) to anthranilate to yield N-(5'-phosphoribosyl)-anthranilate (PRA). The sequence is that of Anthranilate phosphoribosyltransferase from Bacillus cereus (strain AH187).